The following is a 61-amino-acid chain: MXFLXFXLXLLXMXXMXXXDSSEEKFLRRLRRFDEGRYGPYQPFAPQPLYPQPYQPYQPQY.

Positions 1–19 (MXFLXFXLXLLXMXXMXXX) are cleaved as a signal peptide. The segment at 20 to 25 (DSSEEK) is hydroxyapatite-binding; inhibits crystal growth. 2 positions are modified to phosphoserine: Ser-21 and Ser-22. Positions 37 to 61 (RYGPYQPFAPQPLYPQPYQPYQPQY) are disordered. Positions 37–61 (RYGPYQPFAPQPLYPQPYQPYQPQY) are hydrophobic; inhibits precipitation of calcium phosphate salts. Residues 43 to 61 (PFAPQPLYPQPYQPYQPQY) are compositionally biased toward pro residues.

Belongs to the histatin/statherin family. In terms of tissue distribution, secreted by parotid and submandibular glands.

It localises to the secreted. Salivary protein that stabilizes saliva supersaturated with calcium salts by inhibiting the precipitation of calcium phosphate salts. It also modulates hydroxyapatite crystal formation on the tooth surface. This Macaca fascicularis (Crab-eating macaque) protein is Statherin (STATH).